The following is an 810-amino-acid chain: Bifunctional aspartokinase/homoserine dehydrogenase 2 (810 aa).

Positions 2 to 252 (SVIAQAGAKG…VKDACLLPLL (251 aa)) are aspartokinase. The segment at 253–463 (RLDEASELAR…RAEKRIGLVL (211 aa)) is interface. Residues 464 to 810 (FGKGNIGSRW…SDINRLAQLL (347 aa)) form a homoserine dehydrogenase region. Residues N468 and I469 each contribute to the NADP(+) site. 2 residues coordinate NAD(+): I469 and V498. Position 469 (I469) interacts with NADPH. Positions 501, 549, and 573 each coordinate NADP(+). T549 provides a ligand contact to NAD(+). Positions 549 and 573 each coordinate NADPH. Positions 603, 605, and 607 each coordinate Na(+). 2 residues coordinate NADP(+): G658 and E661. The L-homoserine site is built by E661 and D672. K676 functions as the Proton donor in the catalytic mechanism. G791 is an NADP(+) binding site. G791 contributes to the NAD(+) binding site. G791 contacts NADPH.

The protein in the N-terminal section; belongs to the aspartokinase family. It in the C-terminal section; belongs to the homoserine dehydrogenase family. As to quaternary structure, homotetramer. A metal cation serves as cofactor.

The enzyme catalyses L-homoserine + NADP(+) = L-aspartate 4-semialdehyde + NADPH + H(+). It carries out the reaction L-homoserine + NAD(+) = L-aspartate 4-semialdehyde + NADH + H(+). It catalyses the reaction L-aspartate + ATP = 4-phospho-L-aspartate + ADP. The protein operates within amino-acid biosynthesis; L-lysine biosynthesis via DAP pathway; (S)-tetrahydrodipicolinate from L-aspartate: step 1/4. Its pathway is amino-acid biosynthesis; L-methionine biosynthesis via de novo pathway; L-homoserine from L-aspartate: step 1/3. It functions in the pathway amino-acid biosynthesis; L-methionine biosynthesis via de novo pathway; L-homoserine from L-aspartate: step 3/3. It participates in amino-acid biosynthesis; L-threonine biosynthesis; L-threonine from L-aspartate: step 1/5. The protein operates within amino-acid biosynthesis; L-threonine biosynthesis; L-threonine from L-aspartate: step 3/5. Bifunctional aspartate kinase and homoserine dehydrogenase that catalyzes the first and the third steps toward the synthesis of lysine, methionine and threonine from aspartate. This chain is Bifunctional aspartokinase/homoserine dehydrogenase 2 (metL), found in Escherichia coli (strain K12).